The chain runs to 258 residues: Imidazole glycerol phosphate synthase subunit HisF (258 aa).

Catalysis depends on residues Asp-11 and Asp-130.

The protein belongs to the HisA/HisF family. In terms of assembly, heterodimer of HisH and HisF.

The protein resides in the cytoplasm. It catalyses the reaction 5-[(5-phospho-1-deoxy-D-ribulos-1-ylimino)methylamino]-1-(5-phospho-beta-D-ribosyl)imidazole-4-carboxamide + L-glutamine = D-erythro-1-(imidazol-4-yl)glycerol 3-phosphate + 5-amino-1-(5-phospho-beta-D-ribosyl)imidazole-4-carboxamide + L-glutamate + H(+). It functions in the pathway amino-acid biosynthesis; L-histidine biosynthesis; L-histidine from 5-phospho-alpha-D-ribose 1-diphosphate: step 5/9. In terms of biological role, IGPS catalyzes the conversion of PRFAR and glutamine to IGP, AICAR and glutamate. The HisF subunit catalyzes the cyclization activity that produces IGP and AICAR from PRFAR using the ammonia provided by the HisH subunit. The chain is Imidazole glycerol phosphate synthase subunit HisF from Rhodospirillum centenum (strain ATCC 51521 / SW).